Reading from the N-terminus, the 198-residue chain is Glycerol-3-phosphate acyltransferase 3 (198 aa).

Transmembrane regions (helical) follow at residues 4–24 (TYLL…LVVG), 71–91 (LPMV…AVLG), 113–133 (LLCY…TLLF), and 147–167 (VVAV…AMCL).

It belongs to the PlsY family. Probably interacts with PlsX.

The protein localises to the cell membrane. It carries out the reaction an acyl phosphate + sn-glycerol 3-phosphate = a 1-acyl-sn-glycero-3-phosphate + phosphate. It functions in the pathway lipid metabolism; phospholipid metabolism. Its function is as follows. Catalyzes the transfer of an acyl group from acyl-phosphate (acyl-PO(4)) to glycerol-3-phosphate (G3P) to form lysophosphatidic acid (LPA). This enzyme utilizes acyl-phosphate as fatty acyl donor, but not acyl-CoA or acyl-ACP. This is Glycerol-3-phosphate acyltransferase 3 from Bacillus anthracis.